The chain runs to 445 residues: tRNA-2-methylthio-N(6)-dimethylallyladenosine synthase (445 aa).

In terms of domain architecture, MTTase N-terminal spans 3-124 (KKLYIKTYGC…LPELISKVVR (122 aa)). Residues Cys12, Cys48, Cys87, Cys162, Cys166, and Cys169 each coordinate [4Fe-4S] cluster. The Radical SAM core domain occupies 148–380 (YPQGASSFIS…QQELATQQLA (233 aa)). The 63-residue stretch at 383-445 (QSCVGSTMRV…ALNSLTGEIL (63 aa)) folds into the TRAM domain.

Belongs to the methylthiotransferase family. MiaB subfamily. Monomer. It depends on [4Fe-4S] cluster as a cofactor.

The protein resides in the cytoplasm. The enzyme catalyses N(6)-dimethylallyladenosine(37) in tRNA + (sulfur carrier)-SH + AH2 + 2 S-adenosyl-L-methionine = 2-methylsulfanyl-N(6)-dimethylallyladenosine(37) in tRNA + (sulfur carrier)-H + 5'-deoxyadenosine + L-methionine + A + S-adenosyl-L-homocysteine + 2 H(+). Its function is as follows. Catalyzes the methylthiolation of N6-(dimethylallyl)adenosine (i(6)A), leading to the formation of 2-methylthio-N6-(dimethylallyl)adenosine (ms(2)i(6)A) at position 37 in tRNAs that read codons beginning with uridine. The protein is tRNA-2-methylthio-N(6)-dimethylallyladenosine synthase of Rickettsia prowazekii (strain Madrid E).